We begin with the raw amino-acid sequence, 123 residues long: Small ribosomal subunit protein uS13 (123 aa).

The disordered stretch occupies residues 94-123 (RRGLPVRGQHTKNNARTRKGPARAIAGKKK).

The protein belongs to the universal ribosomal protein uS13 family. In terms of assembly, part of the 30S ribosomal subunit. Forms a loose heterodimer with protein S19. Forms two bridges to the 50S subunit in the 70S ribosome.

Located at the top of the head of the 30S subunit, it contacts several helices of the 16S rRNA. In the 70S ribosome it contacts the 23S rRNA (bridge B1a) and protein L5 of the 50S subunit (bridge B1b), connecting the 2 subunits; these bridges are implicated in subunit movement. Contacts the tRNAs in the A and P-sites. The polypeptide is Small ribosomal subunit protein uS13 (Oenococcus oeni (strain ATCC BAA-331 / PSU-1)).